Consider the following 978-residue polypeptide: Xylanolytic transcriptional activator xlnR (978 aa).

2 disordered regions span residues 1 to 39 (MSTT…LAEG) and 53 to 116 (AAAG…RDPL). Positions 18–32 (SGLSSNRMAQSQTPG) are enriched in polar residues. Positions 53-69 (AAAGDTTATAASGPSDP) are enriched in low complexity. Residues 71 to 82 (SKSKDPYDFDHH) show a composition bias toward basic and acidic residues. The span at 83-93 (NHNHHNHHNNN) shows a compositional bias: basic residues. Over residues 94-103 (HHPNSNSNNS) the composition is skewed to low complexity. The segment at residues 140–166 (CDQCNQLRTRCDGQNPCAHCIEFGLTC) is a DNA-binding region (zn(2)-C6 fungal-type). Disordered stretches follow at residues 179–223 (SKKD…ELNG), 238–293 (SAQP…PIPV), and 588–629 (ELPP…PGNT). The span at 184-193 (AAAAAAATAT) shows a compositional bias: low complexity. A compositionally biased stretch (basic and acidic residues) spans 214–223 (PPDRRQELNG).

It belongs to the xlnR/xlr1 family.

The protein localises to the nucleus. Its function is as follows. Transcriptional activator of the xylanolytic system. Involved in the regulation of extracellular cellulolytic and xylanolytic genes and in the regulation of the intracellular activities of D-xylose catabolic genes in the pentose catabolic pathway (PCP) in response to the presence of D-xylose. The protein is Xylanolytic transcriptional activator xlnR (xlnR) of Aspergillus clavatus (strain ATCC 1007 / CBS 513.65 / DSM 816 / NCTC 3887 / NRRL 1 / QM 1276 / 107).